The chain runs to 504 residues: Sodium-coupled neutral amino acid symporter 2 (504 aa).

The tract at residues 1–22 is disordered; sequence MKKTEMGRFNISPDEDSSSYSS. The Cytoplasmic segment spans residues 1–76; the sequence is MKKTEMGRFN…HPGTTSFGMS (76 aa). Positions 1–96 are regulates protein turnover upon amino acid deprivation; that stretch reads MKKTEMGRFN…SGILGLSYAM (96 aa). Residues Ser12, Ser21, Ser22, and Ser55 each carry the phosphoserine modification. Residues 77 to 96 form a helical membrane-spanning segment; it reads VFNLSNAIVGSGILGLSYAM. Asn82 contacts Na(+). At 97–102 the chain is on the extracellular side; it reads ANTGIA. Residues 103–123 form a helical membrane-spanning segment; it reads LFIILLTFVSIFSLYSVHLLL. The Cytoplasmic segment spans residues 124-158; sequence KTANEGGSLLYEQLGHKAYGLAGKLAASGSITMQN. A helical transmembrane segment spans residues 159–177; that stretch reads IGAMSSYLFIVKYELPLVI. The Extracellular portion of the chain corresponds to 178–188; sequence KALMNIEDTNG. Residues 189–209 form a helical membrane-spanning segment; sequence LWYLNGDYLVLLVSFVLILPL. Over 210 to 217 the chain is Cytoplasmic; the sequence is SLLRNLGY. Residues 218–238 traverse the membrane as a helical segment; it reads LGYTSGLSLLCMIFFLIVVIC. The Extracellular portion of the chain corresponds to 239–290; it reads KKFQIPCPVEVALMANETVNGTFTQVALAALASNSTAADTCRPRYFIFNSQT. Cys245 and Cys279 are oxidised to a cystine. 3 N-linked (GlcNAc...) asparagine glycosylation sites follow: Asn254, Asn258, and Asn272. Residues 291-311 form a helical membrane-spanning segment; that stretch reads VYAVPILTFSFVCHPAVLPIY. Over 312-327 the chain is Cytoplasmic; the sequence is EELKSRSRRRMMNVSK. Residues 328-348 form a helical membrane-spanning segment; sequence ISFFAMFLMYLLAALFGYLTF. Residues 349-369 lie on the Extracellular side of the membrane; that stretch reads YEHVESELLHTYSAIVGTDIL. Residues 370–390 form a helical membrane-spanning segment; it reads LLVVRLAVLVAVTLTVPVVIF. Thr384 provides a ligand contact to Na(+). Residues 391-411 lie on the Cytoplasmic side of the membrane; sequence PIRSSVTHLLCPTKEFSWFRH. A helical membrane pass occupies residues 412 to 432; sequence SVITVTILAFTNLLVIFVPTI. The Extracellular portion of the chain corresponds to 433-434; that stretch reads RD. Residues 435 to 455 traverse the membrane as a helical segment; that stretch reads IFGFIGASAAAMLIFILPSAF. Topologically, residues 456–470 are cytoplasmic; it reads YIKLVKKEPMRSVQK. A helical membrane pass occupies residues 471–493; it reads IGALCFLLSGVVVMIGSMGLIVL. Over 494–504 the chain is Extracellular; the sequence is DWVHDASAGGH.

Belongs to the amino acid/polyamine transporter 2 family. Post-translationally, polyubiquitination by NEDD4L regulates the degradation and the activity of SLC38A2. As to expression, widely expressed. Expressed in skeletal muscle and adipose tissue (at protein level). Expressed by glutamatergic and GABAergic neurons together with astrocytes and other non-neuronal cells in the cerebral cortex (at protein level). Widely expressed in the central nervous systeme where, it is enriched in the spinal cord and the brainstem nuclei, especially those of the auditory system.

It localises to the cell membrane. It carries out the reaction L-alanine(in) + Na(+)(in) = L-alanine(out) + Na(+)(out). The catalysed reaction is glycine(in) + Na(+)(in) = glycine(out) + Na(+)(out). The enzyme catalyses L-serine(in) + Na(+)(in) = L-serine(out) + Na(+)(out). It catalyses the reaction L-proline(in) + Na(+)(in) = L-proline(out) + Na(+)(out). It carries out the reaction L-methionine(in) + Na(+)(in) = L-methionine(out) + Na(+)(out). The catalysed reaction is L-histidine(in) + Na(+)(in) = L-histidine(out) + Na(+)(out). The enzyme catalyses L-asparagine(in) + Na(+)(in) = L-asparagine(out) + Na(+)(out). It catalyses the reaction L-glutamine(in) + Na(+)(in) = L-glutamine(out) + Na(+)(out). It carries out the reaction L-threonine(in) + Na(+)(in) = L-threonine(out) + Na(+)(out). The catalysed reaction is L-leucine(in) + Na(+)(in) = L-leucine(out) + Na(+)(out). The enzyme catalyses L-phenylalanine(in) + Na(+)(in) = L-phenylalanine(out) + Na(+)(out). Its activity is regulated as follows. Inhibited by N-methyl-D-glucamine. Inhibited by choline. Allosteric regulation of sodium ions binding by pH. Its function is as follows. Symporter that cotransports neutral amino acids and sodium ions from the extracellular to the intracellular side of the cell membrane. The transport is pH-sensitive, Li(+)-intolerant, electrogenic, driven by the Na(+) electrochemical gradient and cotransports of neutral amino acids and sodium ions with a stoichiometry of 1:1. May function in the transport of amino acids at the blood-brain barrier. May function in the transport of amino acids in the supply of maternal nutrients to the fetus through the placenta. Maintains a key metabolic glutamine/glutamate balance underpinning retrograde signaling by dendritic release of the neurotransmitter glutamate. Transports L-proline in differentiating osteoblasts for the efficient synthesis of proline-enriched proteins and provides proline essential for osteoblast differentiation and bone formation during bone development. The polypeptide is Sodium-coupled neutral amino acid symporter 2 (Rattus norvegicus (Rat)).